A 377-amino-acid chain; its full sequence is tRNA/tmRNA (uracil-C(5))-methyltransferase (377 aa).

Glutamine 199, tyrosine 227, asparagine 232, glutamate 248, and aspartate 308 together coordinate S-adenosyl-L-methionine. Cysteine 333 functions as the Nucleophile in the catalytic mechanism. Glutamate 367 acts as the Proton acceptor in catalysis.

Belongs to the class I-like SAM-binding methyltransferase superfamily. RNA M5U methyltransferase family. TrmA subfamily.

The catalysed reaction is uridine(54) in tRNA + S-adenosyl-L-methionine = 5-methyluridine(54) in tRNA + S-adenosyl-L-homocysteine + H(+). The enzyme catalyses uridine(341) in tmRNA + S-adenosyl-L-methionine = 5-methyluridine(341) in tmRNA + S-adenosyl-L-homocysteine + H(+). Its function is as follows. Dual-specificity methyltransferase that catalyzes the formation of 5-methyluridine at position 54 (m5U54) in all tRNAs, and that of position 341 (m5U341) in tmRNA (transfer-mRNA). The chain is tRNA/tmRNA (uracil-C(5))-methyltransferase from Aeromonas hydrophila subsp. hydrophila (strain ATCC 7966 / DSM 30187 / BCRC 13018 / CCUG 14551 / JCM 1027 / KCTC 2358 / NCIMB 9240 / NCTC 8049).